A 363-amino-acid polypeptide reads, in one-letter code: MKLDLYIDKDGQKLRCGYTTGSCAAAAAKAAALILGGETMTSVKIDTPAGLVLDLPVEHCRSYKNKDGTAIGEAAVQKDAGDDPDSTDGIYIYARVSYRNDGKVLIDGGEGIGRITKKGLFGEVGEAAINPVPRQMIEKEVLKVSKKGFNVEIFSPQGAEIGKKTFNKNIGVEGGISIIGTKGIVYPMSEDAIKKTIYLEIDGILQNSEKKEILLVPGNYGEGLKEKLNTIIDLPTVKISNYIGDSLSYAYSKGFKTMTLLGHIGKFAKLSIGIFNTHNRTADTRMEAFVYYLAMHGADKKTIETVNAFLTAEEAFNYLVENKIEMILKAMERGAEERIKKYLKDDSLSIRVLIYSMKYGLIE.

It belongs to the CbiD family.

It carries out the reaction Co-precorrin-5B + S-adenosyl-L-methionine = Co-precorrin-6A + S-adenosyl-L-homocysteine. The protein operates within cofactor biosynthesis; adenosylcobalamin biosynthesis; cob(II)yrinate a,c-diamide from sirohydrochlorin (anaerobic route): step 6/10. Catalyzes the methylation of C-1 in cobalt-precorrin-5B to form cobalt-precorrin-6A. In Treponema denticola (strain ATCC 35405 / DSM 14222 / CIP 103919 / JCM 8153 / KCTC 15104), this protein is Cobalt-precorrin-5B C(1)-methyltransferase.